The sequence spans 555 residues: Luciferin 2-monooxygenase (555 aa).

Positions 1–11 (MKIIILSVILA) are cleaved as a signal peptide. VWFD domains follow at residues 80-266 (IECR…EYCK) and 319-494 (GTCV…RLCN). 4 cysteine pairs are disulfide-bonded: cysteine 82-cysteine 222, cysteine 321-cysteine 454, cysteine 343-cysteine 493, and cysteine 352-cysteine 451. 2 N-linked (GlcNAc...) asparagine glycosylation sites follow: asparagine 186 and asparagine 408.

In terms of processing, the cysteine residues presumably exist in intramolecular disulfide bridges. The N-terminus is blocked.

The catalysed reaction is Cypridina luciferin + O2 = oxidized Cypridina luciferin + hnu + CO2. The sequence is that of Luciferin 2-monooxygenase from Vargula hilgendorfii (Sea firefly).